A 449-amino-acid polypeptide reads, in one-letter code: UDP-N-acetylmuramate--L-alanine ligase (449 aa).

113–119 (GSHGKTT) provides a ligand contact to ATP.

It belongs to the MurCDEF family.

It localises to the cytoplasm. It catalyses the reaction UDP-N-acetyl-alpha-D-muramate + L-alanine + ATP = UDP-N-acetyl-alpha-D-muramoyl-L-alanine + ADP + phosphate + H(+). It functions in the pathway cell wall biogenesis; peptidoglycan biosynthesis. Functionally, cell wall formation. The protein is UDP-N-acetylmuramate--L-alanine ligase of Hydrogenobaculum sp. (strain Y04AAS1).